Consider the following 159-residue polypeptide: Ribosome-binding factor A (159 aa).

2 stretches are compositionally biased toward basic and acidic residues: residues 118 to 128 (AADDEVAKARE) and 137 to 146 (DPYKEPRVAS). A disordered region spans residues 118–159 (AADDEVAKARENAQPAGDADPYKEPRVASDEDEASPDVREAD).

It belongs to the RbfA family. Monomer. Binds 30S ribosomal subunits, but not 50S ribosomal subunits or 70S ribosomes.

The protein localises to the cytoplasm. One of several proteins that assist in the late maturation steps of the functional core of the 30S ribosomal subunit. Associates with free 30S ribosomal subunits (but not with 30S subunits that are part of 70S ribosomes or polysomes). Required for efficient processing of 16S rRNA. May interact with the 5'-terminal helix region of 16S rRNA. This is Ribosome-binding factor A from Rhodococcus erythropolis (strain PR4 / NBRC 100887).